A 160-amino-acid chain; its full sequence is E3 ubiquitin ligase complex SCF subunit sconC (160 aa).

The segment at Ile-101 to Arg-160 is interaction with the F-box domain of F-box proteins.

Belongs to the SKP1 family. Component of the SCF (SKP1-CUL1-F-box protein) E3 ubiquitin ligase complexes.

The protein operates within protein modification; protein ubiquitination. Functionally, essential component of the SCF (SKP1-CUL1-F-box protein) E3 ubiquitin ligase complexes, which mediate the ubiquitination and subsequent proteasomal degradation of target proteins. Controls sulfur metabolite repression, probably by mediating the inactivation or degradation of the metR transcription factor. This Talaromyces marneffei (strain ATCC 18224 / CBS 334.59 / QM 7333) (Penicillium marneffei) protein is E3 ubiquitin ligase complex SCF subunit sconC (sconC).